Consider the following 424-residue polypeptide: UDP-N-acetylglucosamine 1-carboxyvinyltransferase (424 aa).

Residue 22–23 participates in phosphoenolpyruvate binding; it reads KN. Arg-96 serves as a coordination point for UDP-N-acetyl-alpha-D-glucosamine. Residue Cys-120 is the Proton donor of the active site. 2-(S-cysteinyl)pyruvic acid O-phosphothioketal is present on Cys-120. Residues 125 to 129, Asp-312, and Ile-334 each bind UDP-N-acetyl-alpha-D-glucosamine; that span reads RPVDQ.

The protein belongs to the EPSP synthase family. MurA subfamily.

It is found in the cytoplasm. The catalysed reaction is phosphoenolpyruvate + UDP-N-acetyl-alpha-D-glucosamine = UDP-N-acetyl-3-O-(1-carboxyvinyl)-alpha-D-glucosamine + phosphate. It participates in cell wall biogenesis; peptidoglycan biosynthesis. Its function is as follows. Cell wall formation. Adds enolpyruvyl to UDP-N-acetylglucosamine. In Polynucleobacter asymbioticus (strain DSM 18221 / CIP 109841 / QLW-P1DMWA-1) (Polynucleobacter necessarius subsp. asymbioticus), this protein is UDP-N-acetylglucosamine 1-carboxyvinyltransferase.